The primary structure comprises 780 residues: Reticulon-1 (780 aa).

Disordered stretches follow at residues 1-76 (MAAP…VAME), 128-176 (QKEN…AEST), 201-223 (RPQEAKGQEEQHPGLEDKDLDFK), and 293-576 (MTAT…IPGP). Phosphoserine occurs at positions 13 and 70. The residue at position 327 (Ser327) is a Phosphoserine. Residues 328 to 341 (PGSVTPPSSGTEPS) are compositionally biased toward low complexity. Ser350, Ser352, and Ser487 each carry phosphoserine. The segment covering 497 to 512 (AIREETGSRATEERAP) has biased composition (basic and acidic residues). The 188-residue stretch at 593–780 (AIDLLYWRDI…KIPGAKRHAE (188 aa)) folds into the Reticulon domain. 2 helical membrane-spanning segments follow: residues 607 to 627 (IVFGSFLLLLFSLTQFSVVSV) and 709 to 729 (FAVLMWLLTYVGALFNGLTLL).

As to quaternary structure, interacts with NDRG1. Interacts with BACE1. Interacts with TMEM33.

The protein resides in the endoplasmic reticulum membrane. It is found in the golgi apparatus membrane. Functionally, inhibits amyloid precursor protein processing, probably by blocking BACE1 activity. This Mus musculus (Mouse) protein is Reticulon-1 (Rtn1).